The sequence spans 92 residues: Small ribosomal subunit protein uS19 (92 aa).

The protein belongs to the universal ribosomal protein uS19 family.

In terms of biological role, protein S19 forms a complex with S13 that binds strongly to the 16S ribosomal RNA. The protein is Small ribosomal subunit protein uS19 of Jannaschia sp. (strain CCS1).